Reading from the N-terminus, the 114-residue chain is Large ribosomal subunit protein bL19 (114 aa).

Belongs to the bacterial ribosomal protein bL19 family.

This protein is located at the 30S-50S ribosomal subunit interface and may play a role in the structure and function of the aminoacyl-tRNA binding site. This Bacillus cereus (strain AH187) protein is Large ribosomal subunit protein bL19.